Reading from the N-terminus, the 226-residue chain is ATP synthase subunit a (226 aa).

The next 6 helical transmembrane spans lie at 17 to 37 (FSYFFHIGLVALIAVIVAMMA), 79 to 99 (LVATLGIIVFFSNIIGILPGF), 105 to 125 (SLNLTLSLAIIVFVYYHFEGI), 134 to 154 (FAHFMGPIKLLAPLMFPIEIV), 176 to 196 (LFLMVILALVPYIAPLPAYVL), and 199 to 219 (FMAFLQAFIFMILTYVYLAGA).

This sequence belongs to the ATPase A chain family. F-type ATPases have 2 components, CF(1) - the catalytic core - and CF(0) - the membrane proton channel. CF(1) has five subunits: alpha(3), beta(3), gamma(1), delta(1), epsilon(1). CF(0) has three main subunits: a(1), b(2) and c(9-12). The alpha and beta chains form an alternating ring which encloses part of the gamma chain. CF(1) is attached to CF(0) by a central stalk formed by the gamma and epsilon chains, while a peripheral stalk is formed by the delta and b chains.

The protein resides in the cell inner membrane. Its function is as follows. Key component of the proton channel; it plays a direct role in the translocation of protons across the membrane. The chain is ATP synthase subunit a from Campylobacter jejuni subsp. doylei (strain ATCC BAA-1458 / RM4099 / 269.97).